The primary structure comprises 2603 residues: Protein SABRE (2603 aa).

A signal peptide spans 1 to 35; it reads MAASPAKFFFGFLIVSIVLWMIFMLFAWMLSRVLG. Asn-196 is a glycosylation site (N-linked (GlcNAc...) asparagine). Residues 259-287 form a disordered region; the sequence is FPKSKQSSASLRSDEVRTSATAASSAKKP. Asn-331, Asn-486, Asn-597, Asn-807, Asn-867, Asn-887, Asn-1154, Asn-1249, Asn-1280, and Asn-1408 each carry an N-linked (GlcNAc...) asparagine glycan. The interval 786–814 is disordered; sequence PESGCNKGISSVKDGGPSEKINQSNSVNK. The tract at residues 1416-1436 is disordered; it reads FHQSPSSTEHPTDVGTVYSSQ. 2 N-linked (GlcNAc...) asparagine glycosylation sites follow: Asn-1492 and Asn-1659. 2 disordered regions span residues 1656-1676 and 1717-1777; these read EFEN…DDDG and EPPK…DDIG. Positions 1731–1748 are enriched in basic and acidic residues; it reads KIHEENQKESCPETHQGE. A compositionally biased stretch (polar residues) spans 1749 to 1766; sequence MSRSSASPGRNLPSSPSH. The stretch at 1995 to 2023 forms a coiled coil; sequence VEEVELAKINLEEKERERKLLLDDIRKLS. A glycan (N-linked (GlcNAc...) asparagine) is linked at Asn-2333. 3 disordered regions span residues 2339 to 2380, 2448 to 2479, and 2554 to 2603; these read EQQE…RPRK, GKKF…KPDQ, and IRRH…DFRE. Residues 2343 to 2380 are compositionally biased toward basic and acidic residues; that stretch reads DFSKQKVKEIKPVKSGRSSHEEKKAGKSHEEKKSRPRK. Asn-2467 carries an N-linked (GlcNAc...) asparagine glycan. Residues 2554–2565 are compositionally biased toward basic residues; sequence IRRHTKKFRPRS. The span at 2566–2583 shows a compositional bias: polar residues; it reads QRGSTSQQRESLPSSPIE. The span at 2586 to 2603 shows a compositional bias: low complexity; sequence PFESGYSSGSSPYEDFRE.

This sequence belongs to the SABRE family. Highest levels in leaves, also expressed in leaves, flowers, and siliques, and, to a lower extent, in roots and stems.

It is found in the secreted. The protein resides in the golgi apparatus. Functionally, may be involved in membrane trafficking. Required for cell expansion, especially in root cortex, probably by counteracting the action of ethylene in promoting cells radial expansion. Involved in female organ development. Antagonistically interacts with ethylene signaling to regulate plant responses to Pi starvation. This Arabidopsis thaliana (Mouse-ear cress) protein is Protein SABRE.